A 55-amino-acid polypeptide reads, in one-letter code: Preprotein translocase subunit SecG (55 aa).

Topologically, residues 1 to 31 are cytoplasmic; the sequence is MPKNNTNENFQSGAGLIRYFNEEEIKGPALD. A helical transmembrane segment spans residues 32–51; it reads PKLIIYIGIAMAVIVELAKI. The Extracellular portion of the chain corresponds to 52 to 55; the sequence is FWPV.

This sequence belongs to the SEC61-beta family. Component of the protein translocase complex. Heterotrimer consisting of alpha (SecY), beta (SecG) and gamma (SecE) subunits. Can form oligomers of the heterotrimer.

Its subcellular location is the cell membrane. Its function is as follows. Involved in protein export. The function of the beta subunit is unknown, but it may be involved in stabilization of the trimeric complex. The polypeptide is Preprotein translocase subunit SecG (Picrophilus torridus (strain ATCC 700027 / DSM 9790 / JCM 10055 / NBRC 100828 / KAW 2/3)).